We begin with the raw amino-acid sequence, 456 residues long: Phosphomannomutase (456 aa).

Ser-98 serves as the catalytic Phosphoserine intermediate. Ser-98, Asp-245, Asp-247, and Asp-249 together coordinate Mg(2+).

This sequence belongs to the phosphohexose mutase family. Mg(2+) is required as a cofactor.

The enzyme catalyses alpha-D-mannose 1-phosphate = D-mannose 6-phosphate. It functions in the pathway nucleotide-sugar biosynthesis; GDP-alpha-D-mannose biosynthesis; alpha-D-mannose 1-phosphate from D-fructose 6-phosphate: step 2/2. Involved in the biosynthesis of the capsular polysaccharide colanic acid. The chain is Phosphomannomutase (manB) from Salmonella typhimurium (strain LT2 / SGSC1412 / ATCC 700720).